We begin with the raw amino-acid sequence, 232 residues long: Ribosomal RNA small subunit methyltransferase G (232 aa).

Residues Gly-93, Leu-98, 144 to 145, and Arg-163 contribute to the S-adenosyl-L-methionine site; that span reads VE.

This sequence belongs to the methyltransferase superfamily. RNA methyltransferase RsmG family.

Its subcellular location is the cytoplasm. It catalyses the reaction guanosine(527) in 16S rRNA + S-adenosyl-L-methionine = N(7)-methylguanosine(527) in 16S rRNA + S-adenosyl-L-homocysteine. Functionally, specifically methylates the N7 position of guanine in position 527 of 16S rRNA. The protein is Ribosomal RNA small subunit methyltransferase G of Burkholderia pseudomallei (strain 1710b).